Consider the following 600-residue polypeptide: Proline--tRNA ligase (600 aa).

It belongs to the class-II aminoacyl-tRNA synthetase family. ProS type 1 subfamily. In terms of assembly, homodimer.

It localises to the cytoplasm. It catalyses the reaction tRNA(Pro) + L-proline + ATP = L-prolyl-tRNA(Pro) + AMP + diphosphate. Catalyzes the attachment of proline to tRNA(Pro) in a two-step reaction: proline is first activated by ATP to form Pro-AMP and then transferred to the acceptor end of tRNA(Pro). As ProRS can inadvertently accommodate and process non-cognate amino acids such as alanine and cysteine, to avoid such errors it has two additional distinct editing activities against alanine. One activity is designated as 'pretransfer' editing and involves the tRNA(Pro)-independent hydrolysis of activated Ala-AMP. The other activity is designated 'posttransfer' editing and involves deacylation of mischarged Ala-tRNA(Pro). The misacylated Cys-tRNA(Pro) is not edited by ProRS. This chain is Proline--tRNA ligase, found in Synechococcus sp. (strain RCC307).